The primary structure comprises 498 residues: Histone-lysine N-methyltransferase SET5 (498 aa).

The interval 68-94 (KPNDGCTSRSTSCPGGKKKKKSKTDTS) is disordered. In terms of domain architecture, SET spans 108-415 (AGIRGVYFDP…PDDELVISYI (308 aa)).

It belongs to the class V-like SAM-binding methyltransferase superfamily. Histone-lysine methyltransferase family. SET5 subfamily.

The protein localises to the nucleus. It localises to the chromosome. It is found in the cytoplasm. The catalysed reaction is L-lysyl-[histone] + S-adenosyl-L-methionine = N(6)-methyl-L-lysyl-[histone] + S-adenosyl-L-homocysteine + H(+). Its function is as follows. Histone methyltransferase that monomethylates 'Lys-5', 'Lys-8' and 'Lys-12' of histone H4 (H4K5me1, H4K8me1 and H4K12me1, respectively), thereby controlling gene expression and remodeling chromatin structures. The chain is Histone-lysine N-methyltransferase SET5 (SET5) from Mycosarcoma maydis (Corn smut fungus).